We begin with the raw amino-acid sequence, 407 residues long: Argininosuccinate synthase (407 aa).

Position 10–18 (10–18) interacts with ATP; it reads AYSGGLDTS. Residues Tyr-88 and Ser-93 each contribute to the L-citrulline site. Gly-118 is an ATP binding site. L-aspartate is bound by residues Thr-120, Asn-124, and Asp-125. Asn-124 serves as a coordination point for L-citrulline. The L-citrulline site is built by Arg-128, Ser-177, Ser-186, Glu-263, and Tyr-275.

The protein belongs to the argininosuccinate synthase family. Type 1 subfamily. Homotetramer.

The protein resides in the cytoplasm. The enzyme catalyses L-citrulline + L-aspartate + ATP = 2-(N(omega)-L-arginino)succinate + AMP + diphosphate + H(+). Its pathway is amino-acid biosynthesis; L-arginine biosynthesis; L-arginine from L-ornithine and carbamoyl phosphate: step 2/3. In Clostridium botulinum (strain Eklund 17B / Type B), this protein is Argininosuccinate synthase.